Reading from the N-terminus, the 202-residue chain is Protein GrpE 1 (202 aa).

It belongs to the GrpE family. Homodimer.

It is found in the cytoplasm. Functionally, participates actively in the response to hyperosmotic and heat shock by preventing the aggregation of stress-denatured proteins, in association with DnaK and GrpE. It is the nucleotide exchange factor for DnaK and may function as a thermosensor. Unfolded proteins bind initially to DnaJ; upon interaction with the DnaJ-bound protein, DnaK hydrolyzes its bound ATP, resulting in the formation of a stable complex. GrpE releases ADP from DnaK; ATP binding to DnaK triggers the release of the substrate protein, thus completing the reaction cycle. Several rounds of ATP-dependent interactions between DnaJ, DnaK and GrpE are required for fully efficient folding. The sequence is that of Protein GrpE 1 from Buchnera aphidicola subsp. Schizaphis graminum (strain Sg).